The following is a 403-amino-acid chain: MSETELSKEDAVTKKDNEEQVKKALLDPTKKRKAEDEIEIDLKSSIPLSKKQKRLLRRGKVTLEELNAKYNIDPKSIEEYKEDAEKKKSGASEKDAQGEESTINTPTGDESGEVVKKKKKDENKYGVWIGNLSFDTTKDDLVRFFIAKTKDNEDEKSRVTEQDITRLSMPRVAAKNSNAMKNKGFCYMFFKNVEQMKAVLELSESHLNGRNMLIKDSENYSGRPDKDDLVAMSKNPPSRILFVGNLSFDVTDDLLRKHFQHCGDIVKIRMATFEDSGKCKGFAFIDFKNEEGSTNALKDKSCRKIAGRPLRMEYGEDRSKRQVRKKVENVSRNNSSSFDISNNKGYDRAGQDNGSKPEYKRSNANRRPPVDSNNRTKSSVALATAQRGSAAIVPSQGKKVKFD.

Basic and acidic residues-rich tracts occupy residues 1–35 (MSETELSKEDAVTKKDNEEQVKKALLDPTKKRKAE) and 75–97 (KSIEEYKEDAEKKKSGASEKDAQ). Disordered regions lie at residues 1-43 (MSET…IDLK) and 72-116 (IDPK…EVVK). An N-acetylserine modification is found at S2. S2 carries the phosphoserine modification. Polar residues predominate over residues 99–108 (EESTINTPTG). At T105 the chain carries Phosphothreonine. RRM domains are found at residues 125-219 (YGVW…DSEN) and 239-317 (RILF…YGED). Over residues 313 to 329 (EYGEDRSKRQVRKKVEN) the composition is skewed to basic and acidic residues. The segment at 313 to 403 (EYGEDRSKRQ…PSQGKKVKFD (91 aa)) is disordered. The segment covering 330 to 344 (VSRNNSSSFDISNNK) has biased composition (polar residues). The residue at position 335 (S335) is a Phosphoserine. A compositionally biased stretch (basic and acidic residues) spans 345-361 (GYDRAGQDNGSKPEYKR). Residues 371–381 (DSNNRTKSSVA) are compositionally biased toward polar residues.

The protein resides in the nucleus. The protein localises to the nucleolus. This is Nucleolar protein 13 (NOP13) from Saccharomyces cerevisiae (strain ATCC 204508 / S288c) (Baker's yeast).